We begin with the raw amino-acid sequence, 693 residues long: Sodium-dependent dopamine transporter (693 aa).

Residues Met1 to Glu56 lie on the Cytoplasmic side of the membrane. A discontinuously helical membrane pass occupies residues Ala57–Gly95. Gly75, Ala77, Val78, Asp79, and Asn82 together coordinate Na(+). Asp79 provides a ligand contact to dopamine. 2 helical membrane-spanning segments follow: residues Gly96–Gly127 and Ala128–Phe171. Residues Ser149 and Gly153 each contribute to the dopamine site. Topologically, residues Thr172–Pro233 are extracellular. Cys180 and Cys189 form a disulfide bridge. 3 N-linked (GlcNAc...) asparagine glycosylation sites follow: Asn181, Asn196, and Asn202. Transmembrane regions (helical) follow at residues Arg234–Trp253 and Lys254–Leu284. Residues Pro285–Cys303 lie on the Extracellular side of the membrane. The chain crosses the membrane as a discontinuously helical span at residues Glu304 to Tyr332. Gln314 lines the chloride pocket. Position 317 (Phe317) interacts with dopamine. Na(+) is bound by residues Ser318 and Asn350. Ser318 is a binding site for chloride. A helical transmembrane segment spans residues Asn333–Ser373. Chloride is bound at residue Ser354. Residues Val374–Thr397 are Extracellular-facing. 3 helical membrane-spanning segments follow: residues Leu398–His439, Arg440–Asn463, and Gly464–Tyr496. Residues Leu415, Asp418, and Ser419 each contribute to the Na(+) site. Positions 419 and 420 each coordinate dopamine. The Cytoplasmic segment spans residues Gly497–Pro513. Residues Ser514–Thr539 form a helical membrane-spanning segment. At Phe540–Phe550 the chain is on the extracellular side. A helical transmembrane segment spans residues Pro551–Leu580. The segment at Gly558 to Lys587 is interaction with TGFB1I1. The Cytoplasmic segment spans residues Pro581 to Tyr693.

The protein belongs to the sodium:neurotransmitter symporter (SNF) (TC 2.A.22) family. SLC6A3 subfamily. In terms of assembly, monomer. Homooligomer; disulfide-linked. Interacts with PRKCABP and TGFB1I1. Interacts (via N-terminus) with SYNGR3 (via N-terminus). Interacts with SLC18A2. Interacts with TOR1A (ATP-bound); TOR1A regulates SLC6A3 subcellular location. Interacts with alpha-synuclein/SNCA. Interacts with SEPTIN4. In terms of tissue distribution, expressed in the neurons of the substantia nigra of the brain.

The protein localises to the cell membrane. It is found in the cell projection. Its subcellular location is the neuron projection. It localises to the axon. It carries out the reaction dopamine(out) + chloride(out) + Na(+)(out) = dopamine(in) + chloride(in) + Na(+)(in). The enzyme catalyses (R)-noradrenaline(out) + chloride(out) + Na(+)(out) = (R)-noradrenaline(in) + chloride(in) + Na(+)(in). It catalyses the reaction dopamine(out) + chloride(out) + 2 Na(+)(out) = dopamine(in) + chloride(in) + 2 Na(+)(in). With respect to regulation, inhibited by GBR 12909 dihydrochloride, amphetamine and cocaine. Inhibited by zinc ions. Mediates sodium- and chloride-dependent transport of dopamine. Also mediates sodium- and chloride-dependent transport of norepinephrine (also known as noradrenaline). Regulator of light-dependent retinal hyaloid vessel regression, downstream of OPN5 signaling. The chain is Sodium-dependent dopamine transporter (SLC6A3) from Bos taurus (Bovine).